The chain runs to 180 residues: UPF0227 protein CKO_01948 (180 aa).

It belongs to the UPF0227 family.

The polypeptide is UPF0227 protein CKO_01948 (Citrobacter koseri (strain ATCC BAA-895 / CDC 4225-83 / SGSC4696)).